The following is a 338-amino-acid chain: Anthranilate phosphoribosyltransferase (338 aa).

Residues Gly-81, 84–85, Thr-89, 91–94, 109–117, and Ser-121 contribute to the 5-phospho-alpha-D-ribose 1-diphosphate site; these read GD, NIST, and KHGNRAVSS. Position 81 (Gly-81) interacts with anthranilate. Ser-93 contacts Mg(2+). Anthranilate is bound at residue Asn-112. Position 167 (Arg-167) interacts with anthranilate. The Mg(2+) site is built by Asp-226 and Glu-227.

The protein belongs to the anthranilate phosphoribosyltransferase family. As to quaternary structure, homodimer. Requires Mg(2+) as cofactor.

It carries out the reaction N-(5-phospho-beta-D-ribosyl)anthranilate + diphosphate = 5-phospho-alpha-D-ribose 1-diphosphate + anthranilate. The protein operates within amino-acid biosynthesis; L-tryptophan biosynthesis; L-tryptophan from chorismate: step 2/5. Its function is as follows. Catalyzes the transfer of the phosphoribosyl group of 5-phosphorylribose-1-pyrophosphate (PRPP) to anthranilate to yield N-(5'-phosphoribosyl)-anthranilate (PRA). The chain is Anthranilate phosphoribosyltransferase from Myxococcus xanthus (strain DK1622).